A 209-amino-acid polypeptide reads, in one-letter code: NILLSSTLFVLLMFQIIGSGLGCDMKVRGLDANMKKMILDLPNKKRQIVANGQQSGQPSAPNMKELHWNDEIAANAQRSGETGVFEPTAKSLRKTTKYSYLGENIYKGFYPDPIPKSVNGWYEEVKDVPPAVVKSFSSGGPMFGHYTQMVWANTEPLGCGLVTAFDRNSYLFCQYDPGGNYRSHPIYKQGPPASDCKNGKSSKYPGLCN.

Residues 1–22 (NILLSSTLFVLLMFQIIGSGLG) form the signal peptide.

In terms of processing, contains 2 disulfide bonds. As to expression, expressed by the venom gland.

It is found in the secreted. Functionally, may act as a voltage-gated calcium channel inhibitor. The sequence is that of Scoloptoxin SSD346 from Scolopendra dehaani (Thai centipede).